Here is a 547-residue protein sequence, read N- to C-terminus: Smu-2 suppressor of mec-8 and unc-52 protein (547 aa).

Disordered stretches follow at residues 18-125 (TSAR…AQDQ), 164-202 (IDKS…AQEL), 288-459 (AEPK…AGPK), 496-515 (NGEG…AKRL), and 524-547 (KIMD…KPKY). Over residues 34–44 (ADPKTGDDKPA) the composition is skewed to basic and acidic residues. The span at 45–58 (SFKHKHLKPAKFKK) shows a compositional bias: basic residues. The stretch at 66 to 94 (KAKKEKTEADEDEAALKNILKNYRDRAAE) forms a coiled coil. The span at 87–106 (NYRDRAAERRKQGDEKEDPS) shows a compositional bias: basic and acidic residues. The tract at residues 163–223 (EIDKSDDDDD…SLHRVLFKNE (61 aa)) is required and sufficient for interaction with smu-1. Over residues 166-178 (KSDDDDDDDIDTA) the composition is skewed to acidic residues. 2 stretches are compositionally biased toward low complexity: residues 185 to 196 (SSSSSSKPSEAS) and 307 to 317 (APGAAAAAPGA). The segment covering 330 to 423 (VPSRKSRDSR…EREKKRKELE (94 aa)) has biased composition (basic and acidic residues). Repeat copies occupy residues 336 to 337 (RD), 339 to 340 (RD), 348 to 349 (RD), 350 to 351 (RS), 352 to 353 (RD), 354 to 355 (RS), 356 to 357 (RD), 358 to 359 (RD), 360 to 361 (RD), 362 to 363 (RD), 364 to 365 (RD), and 367 to 368 (RD). The tract at residues 336 to 368 (RDSRDAGRRGSRRDRSRDRSRDRDRDRDRDNRD) is 12 X 2 AA repeats of R-[DS]. Residues 371-427 (FEKSANSRREEEQNRREQQRERERAEQERRREREKEREQEKAKEREKKRKELEESSG) are a coiled coil.

The protein belongs to the RED family. As to quaternary structure, probable component of the spliceosome. Heterotetramer with smu-1. The smu-1 homodimer interacts (via the N-terminal region including the LisH and CTLH domains) with smu-2, giving rise to a heterotetramer. In terms of tissue distribution, ubiquitous.

It localises to the nucleus. Auxiliary spliceosomal protein that regulates selection of alternative splice sites in a small set of target pre-mRNA species. Selectively regulates alternative splicing of unc-52 exon 17. Thus, smu-2 mutants selectively suppress the effects of unc-52 nonsense mutations in exon 17 by promoting the accumulation of unc-52 isoforms that lack exon 17. In contrast, smu-2 mutants do not suppress the effects of an unc-52 mutation that affects the 5' splice site of exon 16. Required for normal accumulation of smu-1. The chain is Smu-2 suppressor of mec-8 and unc-52 protein from Caenorhabditis elegans.